We begin with the raw amino-acid sequence, 447 residues long: Na(+)-translocating NADH-quinone reductase subunit A (447 aa).

Belongs to the NqrA family. Composed of six subunits; NqrA, NqrB, NqrC, NqrD, NqrE and NqrF.

The enzyme catalyses a ubiquinone + n Na(+)(in) + NADH + H(+) = a ubiquinol + n Na(+)(out) + NAD(+). NQR complex catalyzes the reduction of ubiquinone-1 to ubiquinol by two successive reactions, coupled with the transport of Na(+) ions from the cytoplasm to the periplasm. NqrA to NqrE are probably involved in the second step, the conversion of ubisemiquinone to ubiquinol. This chain is Na(+)-translocating NADH-quinone reductase subunit A, found in Neisseria gonorrhoeae (strain ATCC 700825 / FA 1090).